Reading from the N-terminus, the 78-residue chain is Translation initiation factor IF-1, chloroplastic (78 aa).

One can recognise an S1-like domain in the interval Met-1–His-72.

This sequence belongs to the IF-1 family. As to quaternary structure, component of the 30S ribosomal translation pre-initiation complex which assembles on the 30S ribosome in the order IF-2 and IF-3, IF-1 and N-formylmethionyl-tRNA(fMet); mRNA recruitment can occur at any time during PIC assembly.

Its subcellular location is the plastid. It is found in the chloroplast. Functionally, one of the essential components for the initiation of protein synthesis. Stabilizes the binding of IF-2 and IF-3 on the 30S subunit to which N-formylmethionyl-tRNA(fMet) subsequently binds. Helps modulate mRNA selection, yielding the 30S pre-initiation complex (PIC). Upon addition of the 50S ribosomal subunit IF-1, IF-2 and IF-3 are released leaving the mature 70S translation initiation complex. In Huperzia lucidula (Shining clubmoss), this protein is Translation initiation factor IF-1, chloroplastic.